The sequence spans 328 residues: Small ribosomal subunit protein bS1A (328 aa).

S1 motif domains are found at residues 31-100, 118-182, and 196-264; these read GDIV…LSIR, DATV…LSHR, and AQVV…LSTK. The interval 298–328 is disordered; the sequence is EAQGIPYEPPTSVDDTDDEEDESLAVSAVDE. The segment covering 311–328 has biased composition (acidic residues); it reads DDTDDEEDESLAVSAVDE.

The protein belongs to the bacterial ribosomal protein bS1 family.

In terms of biological role, binds mRNA. The sequence is that of Small ribosomal subunit protein bS1A (rps1A) from Synechocystis sp. (strain ATCC 27184 / PCC 6803 / Kazusa).